The primary structure comprises 369 residues: MDFTSDTTNSHDTSNSHLSLEDAVGTHHAGEADVNIDGDEKQQLSLLDDDQVRALKLQEEKDALLTRRNTLLQEIQTYQNILMKENNSKTKNGDILQNDITQDFLNLISISSSNPNSAISDRKRVERINGLTNLQKELVTKYDTLPLLNMNLRLSYLRDHTYPHLQVSVQSRDRVHNDGIEVLVVNYKFCRNTMNPFEIQFKMFYKFEDSTLLKWEILRISTNVRLKAKQLLATRNFQKCLLSLYEFDKIKSKKTGIFQNLINLLKRKTRCYLMNNSDSLIVERVIREGRLTTIKLQINFIITMPGERGKPRNCFLPMSKISIALWKGGERFNQIDLDEICYGLIKEYGVKTGLKEICNVCLFPDMYAR.

Residues 51 to 87 (QVRALKLQEEKDALLTRRNTLLQEIQTYQNILMKENN) adopt a coiled-coil conformation.

Belongs to the CENP-P/CTF19 family. As to quaternary structure, component of the heterotetrameric kinetochore subcomplex COMA, which consists of AME1, CTF19, MCM21 and OKP1. The COMA subcomplex is part of a larger constitutive centromere-associated network (CCAN) (also known as central kinetochore CTF19 complex in yeast), which is composed of at least AME1, CHL4, CNN1, CTF3, CTF19, IML3, MCM16, MCM21, MCM22, MHF1, MHF2, MIF2, NKP1, NKP2, OKP1 and WIP1. COMA binds the centromeric nucleosome-binding protein MIF2, and to the outer kinetochore MIND subcomplex. CTF19 interacts with the CTF3 complex subunits CTF3, MCM16 and MCM22 as well as CHL4 and IML3. Interacts with the N-terminal domain of centromeric nucleosome protein CSE4 and with the CBF3 complex subunit A (CBF2).

It is found in the nucleus. The protein resides in the chromosome. The protein localises to the centromere. Its subcellular location is the kinetochore. Its function is as follows. Component of the kinetochore, a multiprotein complex that assembles on centromeric DNA and attaches chromosomes to spindle microtubules, mediating chromosome segregation and sister chromatid segregation during meiosis and mitosis. Component of the inner kinetochore COMA complex, which connects centromere-associated proteins and the outer kinetochore. COMA interacts with other inner kinetochore proteins to form the inner kinetochore constitutive centromere-associated network (CCAN), which serves as a structural platform for outer kinetochore assembly. The chain is Inner kinetochore subunit CTF19 (CTF19) from Saccharomyces cerevisiae (strain ATCC 204508 / S288c) (Baker's yeast).